The chain runs to 567 residues: Septation ring formation regulator EzrA (567 aa).

The Extracellular segment spans residues 1-2 (ME). Residues 3-21 (FIIGLIVILLALFSVGYFL) form a helical membrane-spanning segment. The Cytoplasmic portion of the chain corresponds to 22–567 (RKNIYKEIDR…AQQEKEYQHQ (546 aa)). Coiled-coil stretches lie at residues 108–185 (IEDL…YEEE), 243–375 (KGYK…RDHV), and 402–529 (KGHL…ERRF).

This sequence belongs to the EzrA family.

The protein resides in the cell membrane. In terms of biological role, negative regulator of FtsZ ring formation; modulates the frequency and position of FtsZ ring formation. Inhibits FtsZ ring formation at polar sites. Interacts either with FtsZ or with one of its binding partners to promote depolymerization. The protein is Septation ring formation regulator EzrA of Bacillus pumilus (strain SAFR-032).